The chain runs to 297 residues: Phosphatidylglycerol--prolipoprotein diacylglyceryl transferase (297 aa).

4 helical membrane passes run 20–40 (FLTI…GLFV), 50–70 (INPL…IIGA), 105–125 (AVWE…LSII), and 133–153 (IHLK…QSIG). Residue Arg-154 coordinates a 1,2-diacyl-sn-glycero-3-phospho-(1'-sn-glycerol). The next 3 membrane-spanning stretches (helical) occupy residues 193 to 213 (PTFL…IFVF), 225 to 245 (GFIS…IEGL), and 266 to 286 (AQFI…FLRL).

It belongs to the Lgt family.

It localises to the cell inner membrane. The enzyme catalyses L-cysteinyl-[prolipoprotein] + a 1,2-diacyl-sn-glycero-3-phospho-(1'-sn-glycerol) = an S-1,2-diacyl-sn-glyceryl-L-cysteinyl-[prolipoprotein] + sn-glycerol 1-phosphate + H(+). The protein operates within protein modification; lipoprotein biosynthesis (diacylglyceryl transfer). Functionally, catalyzes the transfer of the diacylglyceryl group from phosphatidylglycerol to the sulfhydryl group of the N-terminal cysteine of a prolipoprotein, the first step in the formation of mature lipoproteins. The chain is Phosphatidylglycerol--prolipoprotein diacylglyceryl transferase from Prochlorococcus marinus (strain MIT 9312).